A 526-amino-acid polypeptide reads, in one-letter code: 4-alpha-glucanotransferase (526 aa).

It belongs to the disproportionating enzyme family.

The protein localises to the cytoplasm. It catalyses the reaction Transfers a segment of a (1-&gt;4)-alpha-D-glucan to a new position in an acceptor, which may be glucose or a (1-&gt;4)-alpha-D-glucan.. The sequence is that of 4-alpha-glucanotransferase (malQ) from Chlamydia pneumoniae (Chlamydophila pneumoniae).